A 342-amino-acid polypeptide reads, in one-letter code: Delta-aminolevulinic acid dehydratase (342 aa).

Residues Cys-133, Cys-135, and Cys-143 each contribute to the Zn(2+) site. The active-site Schiff-base intermediate with substrate is Lys-210. Positions 220 and 232 each coordinate 5-aminolevulinate. Ser-254 carries the phosphoserine modification. The active-site Schiff-base intermediate with substrate is the Lys-263. 5-aminolevulinate-binding residues include Ser-290 and Tyr-329.

This sequence belongs to the ALAD family. In terms of assembly, homooctamer. It depends on Zn(2+) as a cofactor.

The enzyme catalyses 2 5-aminolevulinate = porphobilinogen + 2 H2O + H(+). Its pathway is porphyrin-containing compound metabolism; protoporphyrin-IX biosynthesis; coproporphyrinogen-III from 5-aminolevulinate: step 1/4. With respect to regulation, inhibited by divalent lead ions. In terms of biological role, catalyzes an early step in the biosynthesis of tetrapyrroles. Binds two molecules of 5-aminolevulinate per subunit, each at a distinct site, and catalyzes their condensation to form porphobilinogen. This is Delta-aminolevulinic acid dehydratase (HEM2) from Saccharomyces cerevisiae (strain ATCC 204508 / S288c) (Baker's yeast).